The following is a 427-amino-acid chain: Histidinol dehydrogenase (427 aa).

Residues Ser232, Gln254, and His257 each coordinate substrate. Positions 254 and 257 each coordinate Zn(2+). Active-site proton acceptor residues include Glu322 and His323. 4 residues coordinate substrate: His323, Asp356, Glu410, and His415. Asp356 contributes to the Zn(2+) binding site. A Zn(2+)-binding site is contributed by His415.

Belongs to the histidinol dehydrogenase family. Requires Zn(2+) as cofactor.

It carries out the reaction L-histidinol + 2 NAD(+) + H2O = L-histidine + 2 NADH + 3 H(+). The protein operates within amino-acid biosynthesis; L-histidine biosynthesis; L-histidine from 5-phospho-alpha-D-ribose 1-diphosphate: step 9/9. Functionally, catalyzes the sequential NAD-dependent oxidations of L-histidinol to L-histidinaldehyde and then to L-histidine. The sequence is that of Histidinol dehydrogenase from Listeria monocytogenes serotype 4b (strain F2365).